Consider the following 634-residue polypeptide: Probable beta-glucosidase C (634 aa).

A signal peptide spans 1-19; it reads MRIDCTVASLTALASGCQA. 4 N-linked (GlcNAc...) asparagine glycosylation sites follow: Asn-90, Asn-112, Asn-219, and Asn-270. Residue Asp-337 is part of the active site. Asn-360, Asn-476, Asn-484, and Asn-524 each carry an N-linked (GlcNAc...) asparagine glycan.

It belongs to the glycosyl hydrolase 3 family.

It is found in the secreted. The enzyme catalyses Hydrolysis of terminal, non-reducing beta-D-glucosyl residues with release of beta-D-glucose.. The protein operates within glycan metabolism; cellulose degradation. In terms of biological role, beta-glucosidases are one of a number of cellulolytic enzymes involved in the degradation of cellulosic biomass. Catalyzes the last step releasing glucose from the inhibitory cellobiose. The chain is Probable beta-glucosidase C (bglC) from Aspergillus flavus (strain ATCC 200026 / FGSC A1120 / IAM 13836 / NRRL 3357 / JCM 12722 / SRRC 167).